The following is a 706-amino-acid chain: Envelope glycoprotein H (706 aa).

The signal sequence occupies residues 1–18; it reads MQLLCVFCLVLLWEVGAA. Over 19 to 682 the chain is Virion surface; sequence SLSEVKLHLD…LYEERAHVVL (664 aa). An N-linked (GlcNAc...) asparagine; by host glycan is attached at Asn-60. Residues 165-229 form an interaction with gL region; sequence DKFQYTGAMT…QSGDYSLVIV (65 aa). Residues Cys-278 and Cys-335 are joined by a disulfide bond. Asn-435 is a glycosylation site (N-linked (GlcNAc...) asparagine; by host). 2 disulfides stabilise this stretch: Cys-454–Cys-478 and Cys-534–Cys-587. N-linked (GlcNAc...) asparagine; by host glycans are attached at residues Asn-549 and Asn-604. An intrachain disulfide couples Cys-612 to Cys-615. Asn-664 carries an N-linked (GlcNAc...) asparagine; by host glycan. The chain crosses the membrane as a helical span at residues 683–703; the sequence is AIILYFIAFALGIFLVHKIVM. The Intravirion portion of the chain corresponds to 704–706; that stretch reads FFL.

This sequence belongs to the herpesviridae glycoprotein H family. In terms of assembly, interacts with glycoprotein L (gL); this interaction is necessary for the correct processing and cell surface expression of gH. The heterodimer gH/gL seems to interact with gB trimers during fusion. The heterodimer gH/gL interacts with host EPHA2 to facilitate virus internalization and fusion. Interacts with glycoprotein 42/BZLF2. In terms of processing, N-glycosylated, O-glycosylated, and sialylated.

It is found in the virion membrane. Its subcellular location is the host cell membrane. The protein localises to the host endosome membrane. The heterodimer glycoprotein H-glycoprotein L is required for the fusion of viral and plasma membranes leading to virus entry into the host cell. Following initial binding to host receptor, membrane fusion is mediated by the fusion machinery composed of gB and the heterodimer gH/gL. May also be involved in the fusion between the virion envelope and the outer nuclear membrane during virion morphogenesis. The heterodimer gH/gL targets also host EPHA2 to promote viral entry. This chain is Envelope glycoprotein H, found in Homo sapiens (Human).